The sequence spans 1196 residues: Calcium-activated potassium channel subunit alpha-1 (1196 aa).

Residues 1–52 (MATWNASQIILNSMSNIIESPQSKPRPVMASNGASLFIPVTMEVPCDQGTRM) lie on the Extracellular side of the membrane. The helical transmembrane segment at 53–73 (WWAFLASSMVTFFGGLFIILV) threads the bilayer. The Cytoplasmic portion of the chain corresponds to 74–146 (WRTFKYLWTV…MISAQTLTGR (73 aa)). Residues 147-167 (VLVVTVFALSIGALMIYFIDS) traverse the membrane as a helical segment. The Extracellular segment spans residues 168 to 182 (SNPIESCQNFYKDFT). Residues 183–203 (LQIDMAFNIFFLLYFGLRFIA) form a helical membrane-spanning segment. Residues 204-207 (ANDK) lie on the Cytoplasmic side of the membrane. Residues 208 to 228 (LWFWLEVNSVVDFFTVPPVFV) traverse the membrane as a helical segment. The Extracellular portion of the chain corresponds to 229–232 (SVYL). The helical; Voltage-sensor transmembrane segment at 233-253 (NRSWLGLRFLRALRLIQFSEI) threads the bilayer. Residues 254-268 (LQFLNILKTSNSIKL) lie on the Cytoplasmic side of the membrane. The helical transmembrane segment at 269-289 (VNLCSIFISTWLTAAGFIHLV) threads the bilayer. Over 290 to 303 (ENSGDPWRNFENSQ) the chain is Extracellular. The pore-forming intramembrane region spans 304-326 (DLSYWECMYLLMVTMSTVGYGDV). Residues 320–323 (TVGY) carry the Selectivity for potassium motif. Topologically, residues 327 to 335 (YAKTTLGRL) are extracellular. The chain crosses the membrane as a helical span at residues 336 to 356 (FMVFFILGGLAMFASYVPEII). Over 357-1196 (ELIGNRKKYG…PPIREVEDEC (840 aa)) the chain is Cytoplasmic. Residues 375–517 (RKHIVVCGHI…WNWKDGDDAI (143 aa)) form the RCK N-terminal 1 domain. Mg(2+)-binding residues include E407, Q430, and E432. Positions 524 to 544 (LGFIAQSCLAQGLSTMLANLF) are segment S7. A segment S8 region spans residues 581-601 (LSFPAVCELCFVKLKLLMIAI). The interval 645 to 649 (CKACH) is heme-binding motif. Positions 672–697 (SALSPKKKQRNGGMRHSPNTSPNMMR) are disordered. Residues 748–768 (VLSGHVVVCIFGDMTSALIGV) form a segment S9 region. Positions 750–894 (SGHVVVCIFG…MERSSPDNSP (145 aa)) constitute an RCK N-terminal 2 domain. The short motif at 914 to 936 (TELVNDSNVQFLDQDDDDDPDTE) is the Calcium bowl element. Ca(2+) is bound by residues Q923, D926, D929, and D931. The tract at residues 943–963 (FACGTAFAVSVLDSLMSATYF) is segment S10. Over residues 1098-1119 (ASLSHSSHSSHSSSKKSSSVTS) the composition is skewed to low complexity. The tract at residues 1098 to 1149 (ASLSHSSHSSHSSSKKSSSVTSILHTASANRQNRVKARDSRDKQKMGQAEKK) is disordered. Residues 1120-1129 (ILHTASANRQ) show a composition bias toward polar residues. Positions 1133 to 1149 (KARDSRDKQKMGQAEKK) are enriched in basic and acidic residues.

The protein belongs to the potassium channel family. Calcium-activated (TC 1.A.1.3) subfamily. KCa1.1/KCNMA1 sub-subfamily. In terms of assembly, homotetramer; which constitutes the calcium-activated potassium channel. In terms of tissue distribution, expressed in both the somites and neural tube of 1 day embryos. Within the nervous system, it is restricted to dorsal parts, and expressed centrally in regions dedicated to processing of sensory information. Six hours later, it is expressed segmentally within the somites. At this time, it is expressed in a primary sensory organ, the trigeminal ganglion. By 2 days, it is also expressed in other primary sensory organs, such as the otic vesicle, and the eye. Within the retina, it is expressed to an internal layer. In the developing otic vesicle, it is abundantly expressed near the apical surface. Isoform 3 is neural-specific, and is only expressed during late stages of neuronal differentiation.

The protein resides in the cell membrane. It carries out the reaction K(+)(in) = K(+)(out). With respect to regulation, ethanol and carbon monoxide-bound heme increase channel activation. Heme inhibits channel activation. Functionally, potassium channel activated by both membrane depolarization or increase in cytosolic Ca(2+) that mediates export of K(+). It is also activated by the concentration of cytosolic Mg(2+). Its activation dampens the excitatory events that elevate the cytosolic Ca(2+) concentration and/or depolarize the cell membrane. It therefore contributes to repolarization of the membrane potential. Plays a key role in controlling excitability in a number of systems, such as regulation of the contraction of smooth muscle, the tuning of hair cells in the cochlea, regulation of transmitter release, and innate immunity. In smooth muscles, its activation by high level of Ca(2+), caused by ryanodine receptors in the sarcoplasmic reticulum, regulates the membrane potential. In cochlea cells, its number and kinetic properties partly determine the characteristic frequency of each hair cell and thereby helps to establish a tonotopic map. Highly sensitive to both iberiotoxin (IbTx) and charybdotoxin (CTX). In Xenopus laevis (African clawed frog), this protein is Calcium-activated potassium channel subunit alpha-1 (kcnma1).